The sequence spans 87 residues: Small ribosomal subunit protein bS20 (87 aa).

A disordered region spans residues 1–28 (MANSAQARKRARQASAQRDHNMSQRSEL). The segment covering 17-28 (QRDHNMSQRSEL) has biased composition (basic and acidic residues).

The protein belongs to the bacterial ribosomal protein bS20 family.

In terms of biological role, binds directly to 16S ribosomal RNA. The sequence is that of Small ribosomal subunit protein bS20 from Thiobacillus denitrificans (strain ATCC 25259 / T1).